We begin with the raw amino-acid sequence, 487 residues long: Probable Xaa-Pro aminopeptidase AFUB_014460 (487 aa).

Mn(2+) is bound by residues D267, D278, E416, and E455.

This sequence belongs to the peptidase M24B family. The cofactor is Mn(2+).

It catalyses the reaction Release of any N-terminal amino acid, including proline, that is linked to proline, even from a dipeptide or tripeptide.. Catalyzes the removal of a penultimate prolyl residue from the N-termini of peptides. This Aspergillus fumigatus (strain CBS 144.89 / FGSC A1163 / CEA10) (Neosartorya fumigata) protein is Probable Xaa-Pro aminopeptidase AFUB_014460.